The sequence spans 613 residues: Pescadillo homolog (613 aa).

The stretch at 259 to 344 (KELSNELETK…MKQIEHDIIX (86 aa)) forms a coiled coil. A disordered region spans residues 268–333 (KESTEDNIIE…KNDQKNDQKN (66 aa)). A compositionally biased stretch (basic and acidic residues) spans 278-333 (ENEKKTKNGKTENCEKNDQENEKKTKNDKTKNCEKNDQKNDQKNDQKNDQKNDQKN). The 104-residue stretch at 350 to 453 (SVKNLFKNHI…MILSCEDYNI (104 aa)) folds into the BRCT domain. The segment at 485 to 517 (LSEDPQYNKSIQKNKTNSENKXNNYNDNENDMS) is disordered. Positions 492–601 (NKSIQKNKTN…ENRQKLTIEK (110 aa)) form a coiled coil. Low complexity predominate over residues 497-511 (KNKTNSENKXNNYND).

This sequence belongs to the pescadillo family.

Its subcellular location is the nucleus. It is found in the nucleolus. The protein resides in the nucleoplasm. Its function is as follows. Required for maturation of ribosomal RNAs and formation of the large ribosomal subunit. The protein is Pescadillo homolog of Plasmodium yoelii yoelii.